A 513-amino-acid polypeptide reads, in one-letter code: 2-isopropylmalate synthase (513 aa).

In terms of domain architecture, Pyruvate carboxyltransferase spans 5-268; it reads LIIFDTTLRD…DLRVDTSQIV (264 aa). The Mn(2+) site is built by Asp-14, His-202, His-204, and Asn-239. Positions 394–513 are regulatory domain; that stretch reads RLLALSQHSE…SKAERVAAQG (120 aa).

This sequence belongs to the alpha-IPM synthase/homocitrate synthase family. LeuA type 1 subfamily. In terms of assembly, homodimer. Mn(2+) serves as cofactor.

It localises to the cytoplasm. It catalyses the reaction 3-methyl-2-oxobutanoate + acetyl-CoA + H2O = (2S)-2-isopropylmalate + CoA + H(+). Its pathway is amino-acid biosynthesis; L-leucine biosynthesis; L-leucine from 3-methyl-2-oxobutanoate: step 1/4. Catalyzes the condensation of the acetyl group of acetyl-CoA with 3-methyl-2-oxobutanoate (2-ketoisovalerate) to form 3-carboxy-3-hydroxy-4-methylpentanoate (2-isopropylmalate). The chain is 2-isopropylmalate synthase from Leptothrix cholodnii (strain ATCC 51168 / LMG 8142 / SP-6) (Leptothrix discophora (strain SP-6)).